Here is a 165-residue protein sequence, read N- to C-terminus: MLHSALALCLLLITVSSNLAIAIKKEKRPPQTLSRGWGDDITWVQTYEEGLFHARKSNKPLMVIHHLEDCQYCQALKKEFAKNEEIQEMAQNDFIMLNLMHETTDKNLSPDGQYVPRIMFVDPSLTVRADITGRYSNRLYTYEPQDLPMLVDNMKKALRLIQSEL.

An N-terminal signal peptide occupies residues 1–20; sequence MLHSALALCLLLITVSSNLA. The Prevents secretion from ER motif lies at 162–165; sequence QSEL.

Belongs to the AGR family. Interacts with LYPD3 and DAG1 (alphaDAG1). Expressed in the ciliated cells of the airway epithelium. Not detected in the mucous cells.

Its subcellular location is the endoplasmic reticulum. The protein localises to the cytoplasm. Functionally, required for calcium-mediated regulation of ciliary beat frequency and mucociliary clearance in the airway. Might be involved in the regulation of intracellular calcium in tracheal epithelial cells. In Mus musculus (Mouse), this protein is Anterior gradient protein 3.